The following is a 263-amino-acid chain: Small ribosomal subunit protein uS2 (263 aa).

Positions 230-249 (GEALVNEEKEITDEEKKEVL) are enriched in basic and acidic residues. The interval 230 to 263 (GEALVNEEKEITDEEKKEVLDEAMSEEDFGEEQE) is disordered. The span at 250-263 (DEAMSEEDFGEEQE) shows a compositional bias: acidic residues.

The protein belongs to the universal ribosomal protein uS2 family.

The sequence is that of Small ribosomal subunit protein uS2 from Campylobacter jejuni subsp. jejuni serotype O:2 (strain ATCC 700819 / NCTC 11168).